Consider the following 198-residue polypeptide: Recombination protein RecR (198 aa).

A C4-type zinc finger spans residues 57–72; that stretch reads CSICGNLTDDDPCHIC. The region spanning 80–175 is the Toprim domain; it reads TTILVVEDAK…KVTRLARGLA (96 aa).

This sequence belongs to the RecR family.

May play a role in DNA repair. It seems to be involved in an RecBC-independent recombinational process of DNA repair. It may act with RecF and RecO. This Streptococcus pyogenes serotype M5 (strain Manfredo) protein is Recombination protein RecR.